The following is a 60-amino-acid chain: Protein YmjC (60 aa).

Positions 40 to 60 (HKPYPTNKMQTTSGKKVIQDR) are disordered.

The protein is Protein YmjC (ymjC) of Escherichia coli (strain K12).